We begin with the raw amino-acid sequence, 424 residues long: GTPase Obg (424 aa).

Positions 1–160 (MFDRVEIRIK…YELILELKLI (160 aa)) constitute an Obg domain. An OBG-type G domain is found at 161–328 (ADVAIIGYPN…LLDKVAEKLA (168 aa)). GTP-binding positions include 167 to 174 (GYPNVGKS), 192 to 196 (FTTLS), 213 to 216 (EVPG), 280 to 283 (NKID), and 309 to 311 (SAL). Serine 174 and threonine 194 together coordinate Mg(2+). The OCT domain occupies 349–424 (PAPKGKMGFH…IITGRLEWYL (76 aa)).

This sequence belongs to the TRAFAC class OBG-HflX-like GTPase superfamily. OBG GTPase family. Monomer. Mg(2+) serves as cofactor.

Its subcellular location is the cytoplasm. Its function is as follows. An essential GTPase which binds GTP, GDP and possibly (p)ppGpp with moderate affinity, with high nucleotide exchange rates and a fairly low GTP hydrolysis rate. Plays a role in control of the cell cycle, stress response, ribosome biogenesis and in those bacteria that undergo differentiation, in morphogenesis control. This chain is GTPase Obg, found in Dehalococcoides mccartyi (strain ATCC BAA-2266 / KCTC 15142 / 195) (Dehalococcoides ethenogenes (strain 195)).